The sequence spans 539 residues: F-box only protein 31 (539 aa).

The segment at 11 to 53 (GPSRGCRRRQQRRGPAETAAADSEPDTDPEEERIEASAGVGGG) is disordered. Ser-33 is modified (phosphoserine). Ser-33 carries the phosphoserine; by PKB/AKT1 modification. Acidic residues predominate over residues 33–43 (SEPDTDPEEER). Thr-37 carries the phosphothreonine modification. Positions 64–69 (RCSLLE) match the D box motif. Positions 64–110 (RCSLLELPPELLVEIFASLPGTDLPSLAQVCTKFRRILHTDTIWRRR) constitute an F-box domain. Cys-206, His-214, Cys-230, and His-236 together coordinate Zn(2+). Ser-278 carries the phosphoserine; by ATM modification. The DDL motif signature appears at 297 to 299 (DDL). Residues 377 to 397 (VRQEQQEGGHEAGEGRGRQGP) are compositionally biased toward basic and acidic residues. A disordered region spans residues 377 to 446 (VRQEQQEGGH…PAQCGQGQPF (70 aa)). Position 419 is a phosphothreonine; by MTOR (Thr-419). Ser-480 is subject to Phosphoserine.

Belongs to the FBXO31 family. Part of a SCF (SKP1-cullin-F-box) protein ligase complex SCF(FBXO31) composed of CUL1, SKP1, RBX1 and FBXO31. Interacts (when phosphorylated at Ser-33) with CDC20, promoting ubiquitination by the APC/C complex. Phosphorylation at Ser-278 by ATM following gamma-irradiation results in its stabilization. Phosphorylation at Thr-419 and Ser-480 in absence of stress promotes its ubiquitination and degradation by the SCF(FBXO46) complex. Phosphorylation at Ser-33 by AKT1 promotes association with CDC20 and ubiquitination by the APC/C complex. Post-translationally, ubiquitinated by the SCF(FBXO46) complex in absence of stress, promoting its degradation. Ubiquitinated by the APC/C complex following phosphorylation at Ser-33, leading to its degradation by the proteasome. Highly expressed in brain. Expressed at moderate levels in most tissues, except bone marrow.

It localises to the cytoplasm. The protein resides in the cytoskeleton. Its subcellular location is the microtubule organizing center. The protein localises to the centrosome. Its pathway is protein modification; protein ubiquitination. Functionally, substrate-recognition component of the SCF(FBXO31) protein ligase complex, which specifically mediates the ubiquitination of proteins amidated at their C-terminus in response to oxidative stress, leading to their degradation by the proteasome. FBXO31 specifically recognizes and binds C-terminal peptides bearing an amide: C-terminal amidation in response to oxidative stress takes place following protein fragmentation. The SCF(FBXO31) also plays a role in G1 arrest following DNA damage by mediating ubiquitination of phosphorylated cyclin-D1 (CCND1), promoting its degradation by the proteasome, resulting in G1 arrest. The SCF(FBXO31) complex is however not a major regulator of CCND1 stability during the G1/S transition. In response to genotoxic stress, the SCF(FBXO31) complex directs ubiquitination and degradation of phosphorylated MDM2, thereby promoting p53/TP53-mediated DNA damage response. SCF(FBXO31) complex is required for genomic integrity by catalyzing ubiquitination and degradation of cyclin-A (CCNA1 and/or CCNA2) during the G1 phase. In response to genotoxic stress, the SCF(FBXO31) complex directs ubiquitination and degradation of phosphorylated FBXO46 and MAP2K6. SCF(FBXO31) complex promotes ubiquitination and degradation of CDT1 during the G2 phase to prevent re-replication. The SCF(FBXO31) complex also mediates ubiquitination and degradation of DUSP6, OGT and PARD6A. This Homo sapiens (Human) protein is F-box only protein 31.